A 146-amino-acid chain; its full sequence is MPIALAGGGFFRVSAPPARTPYPEAMSYAEVLGMTILDASPDLTRVALTVTEAGLNMHGTAHGGLIFSLADEAFAVISNLDAQAVAAETHMSFFRAAREGERLVAVATPERVGRTLATYRIEVRRGEEGEVLALFLGTVSRREKQS.

The protein belongs to the thioesterase PaaI family.

This chain is Putative esterase DR_2321, found in Deinococcus radiodurans (strain ATCC 13939 / DSM 20539 / JCM 16871 / CCUG 27074 / LMG 4051 / NBRC 15346 / NCIMB 9279 / VKM B-1422 / R1).